The chain runs to 296 residues: MSNYVNDMWPGSPQEKDSPSASRSGGSSRLSSRSRSRSFSRSSRSRSRVSSRFSSRSRSRSRRSRSRSRSRRRHQRKYRRYSRSYSRSRSRSRSRRYRERRYGFSRRYYRSPSRSRSRSRSRSRSRSRERSYYGRAYAMARGRRYYGFGRTVYPEERSRWRDRSRTRSRSRTPFRLSEKDRMELLEIAKANAAKALGTTNIDLPASLRTVHVAKETSHGIGVSSNGAKPELSENVTEDGPRNPSEKPSQQRSIAFSSNNSVAKPIQKSAKAATEETSSRSPKIDKKKSPYGLWIPV.

A disordered region spans residues M1 to S131. At S12 the chain carries Phosphoserine. Residues S20–S31 show a composition bias toward low complexity. Positions S32–S125 are enriched in basic residues. Phosphoserine occurs at positions 111 and 113. R141 carries the post-translational modification Omega-N-methylarginine. The segment covering E156–R165 has biased composition (basic and acidic residues). 2 disordered regions span residues E156–R175 and S217–V296. Residues E245–V261 are compositionally biased toward polar residues. Over residues A272–K287 the composition is skewed to basic and acidic residues. Phosphoserine is present on S280.

It belongs to the RSRP family. Post-translationally, phosphorylated. Phosphorylation at Ser-111 and Ser-113 mediates the interaction with spliceosome proteins.

The protein localises to the nucleus. Probably acts as a spliceosomal factor that contributes to spliceosome assembly and regulates the isoform switching of proteins such as PARP6. The polypeptide is Arginine/serine-rich protein 1 (RSRP1) (Macaca fascicularis (Crab-eating macaque)).